The primary structure comprises 945 residues: Leucine--tRNA ligase (945 aa).

Residues proline 43–histidine 53 carry the 'HIGH' region motif. Positions lysine 638–serine 642 match the 'KMSKS' region motif. Lysine 641 is an ATP binding site.

This sequence belongs to the class-I aminoacyl-tRNA synthetase family.

The protein localises to the cytoplasm. The catalysed reaction is tRNA(Leu) + L-leucine + ATP = L-leucyl-tRNA(Leu) + AMP + diphosphate. The sequence is that of Leucine--tRNA ligase from Pyrobaculum islandicum (strain DSM 4184 / JCM 9189 / GEO3).